The chain runs to 133 residues: Putative biopolymer transport protein ExbD-like 2 (133 aa).

Topologically, residues 1–9 are cytoplasmic; sequence MKKVESMNV. A helical transmembrane segment spans residues 10 to 30; the sequence is VPFIDIMLVLLVIVLTTASFV. At 31–133 the chain is on the periplasmic side; sequence QTSKLPISIP…LVEDKKNQKN (103 aa).

The protein belongs to the ExbD/TolR family.

The protein resides in the cell inner membrane. The sequence is that of Putative biopolymer transport protein ExbD-like 2 from Helicobacter pylori (strain J99 / ATCC 700824) (Campylobacter pylori J99).